A 1380-amino-acid polypeptide reads, in one-letter code: DNA-directed RNA polymerase subunit beta (1380 aa).

This sequence belongs to the RNA polymerase beta chain family. The RNAP catalytic core consists of 2 alpha, 1 beta, 1 beta' and 1 omega subunit. When a sigma factor is associated with the core the holoenzyme is formed, which can initiate transcription.

It catalyses the reaction RNA(n) + a ribonucleoside 5'-triphosphate = RNA(n+1) + diphosphate. Functionally, DNA-dependent RNA polymerase catalyzes the transcription of DNA into RNA using the four ribonucleoside triphosphates as substrates. The polypeptide is DNA-directed RNA polymerase subunit beta (Rhizobium rhizogenes (strain K84 / ATCC BAA-868) (Agrobacterium radiobacter)).